Reading from the N-terminus, the 229-residue chain is Protein AF_2251 (229 aa).

This sequence belongs to the CinA family.

This chain is Protein AF_2251, found in Archaeoglobus fulgidus (strain ATCC 49558 / DSM 4304 / JCM 9628 / NBRC 100126 / VC-16).